We begin with the raw amino-acid sequence, 261 residues long: WW domain-binding protein 2 (261 aa).

A GRAM domain is found at 1–84 (MALNKNHSEG…YLMKDCEIKQ (84 aa)). Tyr-192 carries the phosphotyrosine modification. The PPxY motif 1 motif lies at 196–200 (PPPPY). Residues 196-209 (PPPPYPGPMEPPVS) are compositionally biased toward pro residues. A disordered region spans residues 196–261 (PPPPYPGPME…YYPPEDKKTQ (66 aa)). The span at 210–230 (GPSAPATPAAEAKAAEAAASA) shows a compositional bias: low complexity. Tyr-231 bears the Phosphotyrosine mark. A compositionally biased stretch (pro residues) spans 245-254 (SQPPPPPYYP). The short motif at 248-252 (PPPPY) is the PPxY motif 2 element.

In terms of assembly, binds to the WW domain of YAP1, WWP1 and WWP2. Interacts with NEDD4. Interacts with ESR1 and UBE3A. Phosphorylated in repsonse to EGF as well as estrogen and progesterone hormones. Tyr-192 and Tyr-231 are phosphorylated by YES and SRC inducing nuclear translocation. As to expression, expressed in the ear and the eye. Isoform 1 is expressed in brain, inner ear and organ of Corti. Isoform 2 is only detected in brain.

Its subcellular location is the cytoplasm. It is found in the nucleus. Functionally, acts as a transcriptional coactivator of estrogen and progesterone receptors (ESR1 and PGR) upon hormone activation. In presence of estrogen, binds to ESR1-responsive promoters. Synergizes with YAP1 to enhance PGR activity. Modulates expression of post-synaptic scaffolding proteins via regulation of ESR1, ESR2 and PGR. In Mus musculus (Mouse), this protein is WW domain-binding protein 2 (Wbp2).